The following is a 315-amino-acid chain: Olfactory receptor 4K3 (315 aa).

The Extracellular segment spans residues 1-25 (MAWSNQSAVTEFILRGLSSSLELQI). An N-linked (GlcNAc...) asparagine glycan is attached at N5. A helical membrane pass occupies residues 26–49 (FYFLFFSIVYAATVLGNLLIVVTI). Over 50–57 (ASEPHLHS) the chain is Cytoplasmic. The helical transmembrane segment at 58 to 79 (PMYFLLGNLSFIDMSLASFATP) threads the bilayer. Residues 80 to 100 (KMIADFLREHKAISFEGCMTQ) are Extracellular-facing. A disulfide bridge links C97 with C189. The chain crosses the membrane as a helical span at residues 101–120 (MFFLHLLGGAEIVLLISMSF). Topologically, residues 121–139 (DRYVAICKPLHYLTIMSRR) are cytoplasmic. The helical transmembrane segment at 140-158 (MCVGLVILSWIVGIFHALS) threads the bilayer. The Extracellular segment spans residues 159–195 (QLAFTVNLPFCGPNEVDSFFCDLPLVIKLACVDTYIL). Residues 196–219 (GVFMISTSGMIALVCFILLVISYT) form a helical membrane-spanning segment. Over 220 to 235 (IILVTVRQRSSGGSSK) the chain is Cytoplasmic. Residues 236 to 258 (ALSTCSAHFTVVTLFFGPCTFIY) traverse the membrane as a helical segment. The Extracellular segment spans residues 259–269 (VWPFTNFPIDK). The helical transmembrane segment at 270-289 (VLSVFYTIYTPLLNPVIYTV) threads the bilayer. Residues 290-315 (RNKDVKYSMRKLSSHIFKSRKTDHTP) lie on the Cytoplasmic side of the membrane.

This sequence belongs to the G-protein coupled receptor 1 family.

It is found in the cell membrane. Odorant receptor. The protein is Olfactory receptor 4K3 (OR4K3) of Homo sapiens (Human).